A 393-amino-acid chain; its full sequence is Formate-dependent phosphoribosylglycinamide formyltransferase (393 aa).

Residues 22 to 23 (EL) and Glu-82 contribute to the N(1)-(5-phospho-beta-D-ribosyl)glycinamide site. Residues Arg-114, Lys-155, 160–165 (SSGKGQ), 195–198 (EGFI), and Glu-203 contribute to the ATP site. Positions 119–308 (RLAAEELDLP…QFALHARAIL (190 aa)) constitute an ATP-grasp domain. Mg(2+) contacts are provided by Glu-267 and Glu-279. N(1)-(5-phospho-beta-D-ribosyl)glycinamide contacts are provided by residues Asp-286, Lys-356, and 363-364 (RR).

The protein belongs to the PurK/PurT family. As to quaternary structure, homodimer.

The enzyme catalyses N(1)-(5-phospho-beta-D-ribosyl)glycinamide + formate + ATP = N(2)-formyl-N(1)-(5-phospho-beta-D-ribosyl)glycinamide + ADP + phosphate + H(+). It participates in purine metabolism; IMP biosynthesis via de novo pathway; N(2)-formyl-N(1)-(5-phospho-D-ribosyl)glycinamide from N(1)-(5-phospho-D-ribosyl)glycinamide (formate route): step 1/1. In terms of biological role, involved in the de novo purine biosynthesis. Catalyzes the transfer of formate to 5-phospho-ribosyl-glycinamide (GAR), producing 5-phospho-ribosyl-N-formylglycinamide (FGAR). Formate is provided by PurU via hydrolysis of 10-formyl-tetrahydrofolate. The chain is Formate-dependent phosphoribosylglycinamide formyltransferase from Pseudomonas putida (strain ATCC 47054 / DSM 6125 / CFBP 8728 / NCIMB 11950 / KT2440).